The chain runs to 98 residues: High mobility group nucleosome-binding domain-containing protein 3 (98 aa).

Basic and acidic residues-rich tracts occupy residues 1–25 (MPKRKSPEGAEGKDAAKVTKQEPTR), 39–52 (PEPKPRKTTKKEPG), 61–71 (GKKDEKQEAAK), and 80–98 (GENKAEEAQKTESVGDKNE). The interval 1 to 98 (MPKRKSPEGA…KTESVGDKNE (98 aa)) is disordered.

Belongs to the HMGN family.

It is found in the nucleus. This is High mobility group nucleosome-binding domain-containing protein 3 (HMGN3) from Gallus gallus (Chicken).